The sequence spans 501 residues: Lysine--tRNA ligase (501 aa).

Mg(2+) is bound by residues Glu404 and Glu411.

It belongs to the class-II aminoacyl-tRNA synthetase family. In terms of assembly, homodimer. The cofactor is Mg(2+).

The protein resides in the cytoplasm. The catalysed reaction is tRNA(Lys) + L-lysine + ATP = L-lysyl-tRNA(Lys) + AMP + diphosphate. The polypeptide is Lysine--tRNA ligase (Campylobacter jejuni subsp. jejuni serotype O:6 (strain 81116 / NCTC 11828)).